A 20-amino-acid polypeptide reads, in one-letter code: Alpha-amylase (20 aa).

The enzyme catalyses Endohydrolysis of (1-&gt;4)-alpha-D-glucosidic linkages in polysaccharides containing three or more (1-&gt;4)-alpha-linked D-glucose units.. With respect to regulation, strongly inhibited by Hg (2+). Inhibited by Zn (2+). Activated by Fe (2+), Mg (2+) and Ba (2+). Its function is as follows. Alpha-amylase active towards amylose, starch, amylopectin and maltodextrins. Has lower activity towards glycogen, and is not active towards alpha/beta-cyclodextrin. The polypeptide is Alpha-amylase (Bacillus sp).